The primary structure comprises 881 residues: Protein P (881 aa).

The tract at residues 1–184 (MHPFYQLFRN…GKPYSWEHRQ (184 aa)) is terminal protein domain (TP). Residues 185–384 (LEQHNGQQHK…YCLHHIVSSI (200 aa)) form a spacer region. Residues 263-351 (IPCESKAPSE…PAGICRGTES (89 aa)) are disordered. Polar residues-rich tracts occupy residues 270–279 (PSEQQQSSLR) and 287–314 (NQIQ…IQSG). The segment covering 326-340 (FERHTPSFDNEKSDR) has biased composition (basic and acidic residues). The tract at residues 385 to 726 (DDWGPCTFDG…YGELWPVARQ (342 aa)) is polymerase/reverse transcriptase domain (RT). The Reverse transcriptase domain occupies 395–636 (DVTIRSPRTP…HTLHFMGYTI (242 aa)). Mg(2+)-binding residues include aspartate 467, aspartate 587, and aspartate 588.

It belongs to the hepadnaviridae P protein family.

It carries out the reaction DNA(n) + a 2'-deoxyribonucleoside 5'-triphosphate = DNA(n+1) + diphosphate. It catalyses the reaction Endonucleolytic cleavage to 5'-phosphomonoester.. Activated by host HSP70 and HSP40 in vitro to be able to bind the epsilon loop of the pgRNA. Because deletion of the RNase H region renders the protein partly chaperone-independent, the chaperones may be needed indirectly to relieve occlusion of the RNA-binding site by this domain. Inhibited by several reverse-transcriptase inhibitors: Lamivudine, Adefovir and Entecavir. Functionally, multifunctional enzyme that converts the viral RNA genome into dsDNA in viral cytoplasmic capsids. This enzyme displays a DNA polymerase activity that can copy either DNA or RNA templates, and a ribonuclease H (RNase H) activity that cleaves the RNA strand of RNA-DNA heteroduplexes in a partially processive 3'- to 5'-endonucleasic mode. Neo-synthesized pregenomic RNA (pgRNA) are encapsidated together with the P protein, and reverse-transcribed inside the nucleocapsid. Initiation of reverse-transcription occurs first by binding the epsilon loop on the pgRNA genome, and is initiated by protein priming, thereby the 5'-end of (-)DNA is covalently linked to P protein. Partial (+)DNA is synthesized from the (-)DNA template and generates the relaxed circular DNA (RC-DNA) genome. After budding and infection, the RC-DNA migrates in the nucleus, and is converted into a plasmid-like covalently closed circular DNA (cccDNA). The activity of P protein does not seem to be necessary for cccDNA generation, and is presumably released from (+)DNA by host nuclear DNA repair machinery. This chain is Protein P, found in Ground squirrel hepatitis virus (strain 27) (GSHV).